Here is a 166-residue protein sequence, read N- to C-terminus: Large ribosomal subunit protein uL10 (166 aa).

The protein belongs to the universal ribosomal protein uL10 family. In terms of assembly, part of the ribosomal stalk of the 50S ribosomal subunit. The N-terminus interacts with L11 and the large rRNA to form the base of the stalk. The C-terminus forms an elongated spine to which L12 dimers bind in a sequential fashion forming a multimeric L10(L12)X complex.

Functionally, forms part of the ribosomal stalk, playing a central role in the interaction of the ribosome with GTP-bound translation factors. In Phytoplasma australiense, this protein is Large ribosomal subunit protein uL10.